Reading from the N-terminus, the 215-residue chain is Octanoyltransferase (215 aa).

The region spanning 42 to 215 is the BPL/LPL catalytic domain; sequence QNTPDEIWLL…AEKLKARLKQ (174 aa). Residues 81-88, 148-150, and 161-163 contribute to the substrate site; these read RGGQITYH, ALG, and GLA. C179 (acyl-thioester intermediate) is an active-site residue.

It belongs to the LipB family.

It is found in the cytoplasm. The catalysed reaction is octanoyl-[ACP] + L-lysyl-[protein] = N(6)-octanoyl-L-lysyl-[protein] + holo-[ACP] + H(+). It functions in the pathway protein modification; protein lipoylation via endogenous pathway; protein N(6)-(lipoyl)lysine from octanoyl-[acyl-carrier-protein]: step 1/2. Catalyzes the transfer of endogenously produced octanoic acid from octanoyl-acyl-carrier-protein onto the lipoyl domains of lipoate-dependent enzymes. Lipoyl-ACP can also act as a substrate although octanoyl-ACP is likely to be the physiological substrate. This chain is Octanoyltransferase, found in Nitrosospira multiformis (strain ATCC 25196 / NCIMB 11849 / C 71).